Reading from the N-terminus, the 363-residue chain is Cytoskeleton protein RodZ (363 aa).

Residues 1–111 are Cytoplasmic-facing; it reads MNTEASQDQT…LGKKHKKRDG (111 aa). One can recognise an HTH cro/C1-type domain in the interval 19–79; that stretch reads LRQARESLGL…KLVHLPEDEL (61 aa). The segment at residues 30-49 is a DNA-binding region (H-T-H motif); it reads QQTVAERLCLKVSTIRDIEE. The chain crosses the membrane as a helical; Signal-anchor for type II membrane protein span at residues 112 to 132; it reads WLMSFTWLIVLVVLGLTGAWW. Over 133–363 the chain is Periplasmic; the sequence is WQNHQAQQAE…RVARLTVGVE (231 aa). The tract at residues 151–277 is disordered; that stretch reads SAQLSQNGGQ…PLPTADAGVS (127 aa). Positions 188-199 are enriched in polar residues; the sequence is PLTNHSVSAITN. Low complexity predominate over residues 200-225; the sequence is SAPTTSSVPTTSSATTSSVPTTSSVP. Residues 226–243 are compositionally biased toward polar residues; the sequence is KINSTEPVDTANTNTTMH. A compositionally biased stretch (low complexity) spans 247 to 259; it reads AASAAVSPSQVPQ.

The protein belongs to the RodZ family.

It is found in the cell inner membrane. Functionally, cytoskeletal protein that is involved in cell-shape control through regulation of the length of the long axis. The protein is Cytoskeleton protein RodZ of Yersinia pseudotuberculosis serotype O:1b (strain IP 31758).